The sequence spans 135 residues: Transcription antitermination protein NusB (135 aa).

It belongs to the NusB family.

Functionally, involved in transcription antitermination. Required for transcription of ribosomal RNA (rRNA) genes. Binds specifically to the boxA antiterminator sequence of the ribosomal RNA (rrn) operons. The chain is Transcription antitermination protein NusB from Bdellovibrio bacteriovorus (strain ATCC 15356 / DSM 50701 / NCIMB 9529 / HD100).